The primary structure comprises 203 residues: Holliday junction branch migration complex subunit RuvA (203 aa).

The segment at 1 to 64 (MIGRLRGIII…EDAQLLYGFN (64 aa)) is domain I. Residues 65 to 142 (NKQERTLFKE…KGLHGDLFTP (78 aa)) form a domain II region. Residues 143-154 (AADLVLTSPASP) form a flexible linker region. Positions 155 to 203 (ATDDAEQEAVAALVALGYKPQEASRMVSKIARPDTSSETLIREALRAAL) are domain III.

It belongs to the RuvA family. As to quaternary structure, homotetramer. Forms an RuvA(8)-RuvB(12)-Holliday junction (HJ) complex. HJ DNA is sandwiched between 2 RuvA tetramers; dsDNA enters through RuvA and exits via RuvB. An RuvB hexamer assembles on each DNA strand where it exits the tetramer. Each RuvB hexamer is contacted by two RuvA subunits (via domain III) on 2 adjacent RuvB subunits; this complex drives branch migration. In the full resolvosome a probable DNA-RuvA(4)-RuvB(12)-RuvC(2) complex forms which resolves the HJ.

It is found in the cytoplasm. Its function is as follows. The RuvA-RuvB-RuvC complex processes Holliday junction (HJ) DNA during genetic recombination and DNA repair, while the RuvA-RuvB complex plays an important role in the rescue of blocked DNA replication forks via replication fork reversal (RFR). RuvA specifically binds to HJ cruciform DNA, conferring on it an open structure. The RuvB hexamer acts as an ATP-dependent pump, pulling dsDNA into and through the RuvAB complex. HJ branch migration allows RuvC to scan DNA until it finds its consensus sequence, where it cleaves and resolves the cruciform DNA. This is Holliday junction branch migration complex subunit RuvA from Shigella flexneri serotype 5b (strain 8401).